The chain runs to 375 residues: Queuine tRNA-ribosyltransferase (375 aa).

Aspartate 89 acts as the Proton acceptor in catalysis. Residues 89–93 (DSGGF), aspartate 143, glutamine 187, and glycine 214 each bind substrate. An RNA binding region spans residues 245-251 (GVGKPED). Residue aspartate 264 is the Nucleophile of the active site. Positions 269–273 (TRNAR) are RNA binding; important for wobble base 34 recognition. 4 residues coordinate Zn(2+): cysteine 302, cysteine 304, cysteine 307, and histidine 333.

Belongs to the queuine tRNA-ribosyltransferase family. Homodimer. Within each dimer, one monomer is responsible for RNA recognition and catalysis, while the other monomer binds to the replacement base PreQ1. Requires Zn(2+) as cofactor.

The enzyme catalyses 7-aminomethyl-7-carbaguanine + guanosine(34) in tRNA = 7-aminomethyl-7-carbaguanosine(34) in tRNA + guanine. The protein operates within tRNA modification; tRNA-queuosine biosynthesis. In terms of biological role, catalyzes the base-exchange of a guanine (G) residue with the queuine precursor 7-aminomethyl-7-deazaguanine (PreQ1) at position 34 (anticodon wobble position) in tRNAs with GU(N) anticodons (tRNA-Asp, -Asn, -His and -Tyr). Catalysis occurs through a double-displacement mechanism. The nucleophile active site attacks the C1' of nucleotide 34 to detach the guanine base from the RNA, forming a covalent enzyme-RNA intermediate. The proton acceptor active site deprotonates the incoming PreQ1, allowing a nucleophilic attack on the C1' of the ribose to form the product. After dissociation, two additional enzymatic reactions on the tRNA convert PreQ1 to queuine (Q), resulting in the hypermodified nucleoside queuosine (7-(((4,5-cis-dihydroxy-2-cyclopenten-1-yl)amino)methyl)-7-deazaguanosine). This Salmonella choleraesuis (strain SC-B67) protein is Queuine tRNA-ribosyltransferase.